Consider the following 183-residue polypeptide: Histone deacetylase complex subunit SAP30L (183 aa).

Position 1 is an N-acetylmethionine (M1). Acidic residues predominate over residues 1 to 10 (MNGFSTEEDS). Residues 1-23 (MNGFSTEEDSREGPPAAPAAAAP) form a disordered region. 2 disulfide bridges follow: C29–C30 and C38–C74. The segment at 29–77 (CCLIEDGERCVRPAGNASFSKRVQKSISQKKLKLDIDKSVRHLYICDFH) adopts an Atypical zinc-finger fold. K49 participates in a covalent cross-link: Glycyl lysine isopeptide (Lys-Gly) (interchain with G-Cter in SUMO2). Residues 85-105 (RNKRKRKTSDDGGDSPEHDTD) are disordered. A Nuclear localization signal (NLS) motif is present at residues 86–91 (NKRKRK). An important for DNA and phosphoinositide binding region spans residues 88–90 (RKR). T92 carries the post-translational modification Phosphothreonine. A phosphoserine mark is found at S93 and S99. T104 is subject to Phosphothreonine. Residues K155, K166, and K175 each participate in a glycyl lysine isopeptide (Lys-Gly) (interchain with G-Cter in SUMO2) cross-link.

Belongs to the SAP30 family. Interacts with components of the histone deacetylase complex SIN3A, HDAC1 and HDAC2. Binds histones and nucleosomes. Interacts with FEZ1. As to expression, detected in brain and ovary, and at lower levels in heart, small intestine, lung, kidney, skeletal muscle, stomach and spleen (at protein level). Ubiquitous; expressed in all tissues tested with highest levels in testis.

The protein localises to the nucleus. The protein resides in the nucleolus. Its function is as follows. Functions as a transcription repressor, probably via its interaction with histone deacetylase complexes. Involved in the functional recruitment of the class 1 Sin3-histone deacetylase complex (HDAC) to the nucleolus. Binds DNA, apparently without sequence-specificity, and bends bound double-stranded DNA. Binds phosphoinositol phosphates (phosphoinositol 3-phosphate, phosphoinositol 4-phosphate and phosphoinositol 5-phosphate) via the same basic sequence motif that mediates DNA binding and nuclear import. In terms of biological role, functions as a transcription repressor; isoform 2 has lower transcription repressor activity than isoform 1 and isoform 3. Functionally, functions as a transcription repressor; its activity is marginally lower than that of isoform 1. This Homo sapiens (Human) protein is Histone deacetylase complex subunit SAP30L (SAP30L).